The following is a 196-amino-acid chain: Peroxisome assembly protein 22 (196 aa).

The chain crosses the membrane as a helical span at residues Leu15–Ile37.

This sequence belongs to the peroxin-22 family.

It is found in the peroxisome membrane. Involved in peroxisome biogenesis. This is Peroxisome assembly protein 22 (PEX22) from Debaryomyces hansenii (strain ATCC 36239 / CBS 767 / BCRC 21394 / JCM 1990 / NBRC 0083 / IGC 2968) (Yeast).